The chain runs to 303 residues: ATP phosphoribosyltransferase (303 aa).

This sequence belongs to the ATP phosphoribosyltransferase family. Long subfamily. The cofactor is Mg(2+).

The protein resides in the cytoplasm. It carries out the reaction 1-(5-phospho-beta-D-ribosyl)-ATP + diphosphate = 5-phospho-alpha-D-ribose 1-diphosphate + ATP. Its pathway is amino-acid biosynthesis; L-histidine biosynthesis; L-histidine from 5-phospho-alpha-D-ribose 1-diphosphate: step 1/9. Its activity is regulated as follows. Feedback inhibited by histidine. Catalyzes the condensation of ATP and 5-phosphoribose 1-diphosphate to form N'-(5'-phosphoribosyl)-ATP (PR-ATP). Has a crucial role in the pathway because the rate of histidine biosynthesis seems to be controlled primarily by regulation of HisG enzymatic activity. The sequence is that of ATP phosphoribosyltransferase from Stenotrophomonas maltophilia (strain R551-3).